A 471-amino-acid chain; its full sequence is Trigger factor (471 aa).

The 86-residue stretch at 169–254 folds into the PPIase FKBP-type domain; the sequence is EDRVTIDYLG…VKEVAKPNEL (86 aa). Positions 435–471 are disordered; it reads VSKEELTAEDEDAASEAKPAKKAAAKKKAEEGKSEEA. Over residues 461 to 471 the composition is skewed to basic and acidic residues; it reads KKAEEGKSEEA.

It belongs to the FKBP-type PPIase family. Tig subfamily.

The protein localises to the cytoplasm. It catalyses the reaction [protein]-peptidylproline (omega=180) = [protein]-peptidylproline (omega=0). Its function is as follows. Involved in protein export. Acts as a chaperone by maintaining the newly synthesized protein in an open conformation. Functions as a peptidyl-prolyl cis-trans isomerase. This is Trigger factor from Brucella abortus (strain S19).